Consider the following 275-residue polypeptide: Chlorobenzene dihydrodiol dehydrogenase (275 aa).

Tyr-155 acts as the Proton acceptor in catalysis.

Belongs to the short-chain dehydrogenases/reductases (SDR) family.

The catalysed reaction is (1R,2R)-3-chlorocyclohexa-3,5-diene-1,2-diol + NAD(+) = 3-chlorocatechol + NADH + H(+). It participates in aromatic compound metabolism. Its function is as follows. Can transform various dihydrodiols of chlorobenzenes and chlorotoluenes into the respective catechols. The polypeptide is Chlorobenzene dihydrodiol dehydrogenase (Cupriavidus sp. (strain PS12)).